The following is a 233-amino-acid chain: Lectin (233 aa).

N-linked (GlcNAc...) asparagine glycosylation is found at N26 and N108. Residues E118 and D120 each contribute to the Mn(2+) site. 4 residues coordinate Ca(2+): D120, W122, N124, and E129. 2 residues coordinate Mn(2+): E129 and H134.

Belongs to the leguminous lectin family. Monomer.

It localises to the secreted. Functionally, has metal-independent hemagglutinating activity towards erythrocytes from rabbit and human. Hemagglutinating activity is inhibited by glycoproteins fetuin, asialo-fetuin, thyroglobulin and azocasein but not by free carbohydrates. Inhibits ADP- and epinephrin-induced but not collagen-, fibrinogen, thrombin- or arachidonic acid-induced platelet aggregation in vitro. Has anticoagulant activity in vitro. This chain is Lectin, found in Bauhinia forficata (Brazilian orchid-tree).